Reading from the N-terminus, the 102-residue chain is Probable non-specific lipid-transfer protein (102 aa).

The first 35 residues, 1–35, serve as a signal peptide directing secretion; sequence MAMAMGMAMRKEAAVAVMMVMVVTLAAGADAGAGA. Cystine bridges form between cysteine 37-cysteine 71, cysteine 45-cysteine 59, cysteine 60-cysteine 95, and cysteine 69-cysteine 102.

Belongs to the plant LTP family. B11E subfamily. As to expression, aleurone.

Its function is as follows. Potential phospholipid transfer protein. In Hordeum vulgare (Barley), this protein is Probable non-specific lipid-transfer protein (LTP2).